An 815-amino-acid chain; its full sequence is Phosphate transporter PHO1-2 (815 aa).

At 1–421 (MVKFSREYEA…QQPRNTHMIT (421 aa)) the chain is on the cytoplasmic side. The SPX domain occupies 2–368 (VKFSREYEAS…EQQRATDLFS (367 aa)). Disordered stretches follow at residues 83-108 (SAGQ…STDK), 166-213 (RGLA…LELQ), and 242-266 (AGKK…GGGG). Residues 97 to 108 (PDRGELVRSTDK) show a composition bias toward basic and acidic residues. Over residues 183-201 (PPSSVHGSSGRYLLSGLSS) the composition is skewed to low complexity. Over residues 202-213 (PQSMSDGSLELQ) the composition is skewed to polar residues. The segment covering 243-254 (GKKDGKTKDGSG) has biased composition (basic and acidic residues). Residues 255-266 (KGRGGGGGGGGG) show a composition bias toward gly residues. Residues 422 to 442 (FLVGLFTGTFVSLFIIYAILA) form a helical membrane-spanning segment. Residues 443 to 458 (HVSGIFTSTGNSAYME) lie on the Extracellular side of the membrane. Residues 459–479 (IVYHVFSMFALISLHIFLYGC) form a helical membrane-spanning segment. At 480 to 508 (NLFMWKNTRINHNFIFDFSSNTALTHRDA) the chain is on the cytoplasmic side. A helical transmembrane segment spans residues 509–529 (FLMSASIMCTVVAALVINLFL). The Extracellular portion of the chain corresponds to 530 to 538 (KNAGVAYAN). The helical transmembrane segment at 539-559 (ALPGALLLLSTGVLFCPFDIF) threads the bilayer. The Cytoplasmic portion of the chain corresponds to 560–686 (YRSTRYCFMR…VRFKYAATPT (127 aa)). Residues 624–815 (TSGQQYKHLA…PLPFRELETD (192 aa)) enclose the EXS domain. A helical transmembrane segment spans residues 687–707 (PFWVWMVIISSSGATIYQLYW). Residues 708–734 (DFVKDWGFLNPKSKNRWLRNELILKNK) are Extracellular-facing. Residues 735–751 (SIYYVSMMLNLALRLAW) form a helical membrane-spanning segment. The Cytoplasmic portion of the chain corresponds to 752–815 (TESVMKIHIG…PLPFRELETD (64 aa)).

Belongs to the SYG1 (TC 2.A.94) family. Specifically expressed in roots.

The protein resides in the cell membrane. Its function is as follows. Involved in the transfer of inorganic phosphate (Pi) from roots to shoots. This chain is Phosphate transporter PHO1-2 (PHO1-2), found in Oryza sativa subsp. japonica (Rice).